The following is a 274-amino-acid chain: Thymidylate synthase (274 aa).

DUMP is bound at residue arginine 21. Histidine 51 lines the (6R)-5,10-methylene-5,6,7,8-tetrahydrofolate pocket. 123–124 (RR) contributes to the dUMP binding site. The Nucleophile role is filled by cysteine 156. Residues 176-179 (RSAD), asparagine 187, and 217-219 (HIY) contribute to the dUMP site. Aspartate 179 lines the (6R)-5,10-methylene-5,6,7,8-tetrahydrofolate pocket. Position 273 (serine 273) interacts with (6R)-5,10-methylene-5,6,7,8-tetrahydrofolate.

It belongs to the thymidylate synthase family. Bacterial-type ThyA subfamily. In terms of assembly, homodimer.

It localises to the cytoplasm. It carries out the reaction dUMP + (6R)-5,10-methylene-5,6,7,8-tetrahydrofolate = 7,8-dihydrofolate + dTMP. Its pathway is pyrimidine metabolism; dTTP biosynthesis. Functionally, catalyzes the reductive methylation of 2'-deoxyuridine-5'-monophosphate (dUMP) to 2'-deoxythymidine-5'-monophosphate (dTMP) while utilizing 5,10-methylenetetrahydrofolate (mTHF) as the methyl donor and reductant in the reaction, yielding dihydrofolate (DHF) as a by-product. This enzymatic reaction provides an intracellular de novo source of dTMP, an essential precursor for DNA biosynthesis. The protein is Thymidylate synthase of Francisella philomiragia subsp. philomiragia (strain ATCC 25017 / CCUG 19701 / FSC 153 / O#319-036).